Reading from the N-terminus, the 527-residue chain is Putative ABC transporter peptide-binding protein BMEII0859 (527 aa).

Residues 1–23 (MRLRNFYSALALSAAVFAGPLYA) form the signal peptide.

Belongs to the bacterial solute-binding protein 5 family. The complex is composed of two ATP-binding proteins (BMEII0863 and BMEII0864), two transmembrane proteins (BMEII0860 and BMEII0861) and a solute-binding protein (BMEII0859).

Its subcellular location is the periplasm. In terms of biological role, probably part of an ABC transporter complex that could be involved in peptide import. In Brucella melitensis biotype 1 (strain ATCC 23456 / CCUG 17765 / NCTC 10094 / 16M), this protein is Putative ABC transporter peptide-binding protein BMEII0859.